Here is a 351-residue protein sequence, read N- to C-terminus: Adenine deaminase (351 aa).

Residues histidine 20, histidine 22, and histidine 200 each coordinate Zn(2+). Glutamate 203 serves as the catalytic Proton donor. Residue aspartate 281 participates in Zn(2+) binding. Aspartate 282 is a binding site for substrate.

It belongs to the metallo-dependent hydrolases superfamily. Adenosine and AMP deaminases family. Adenine deaminase type 2 subfamily. Requires Zn(2+) as cofactor.

The catalysed reaction is adenine + H2O + H(+) = hypoxanthine + NH4(+). Its function is as follows. Catalyzes the hydrolytic deamination of adenine to hypoxanthine. Plays an important role in the purine salvage pathway and in nitrogen catabolism. In Cupriavidus taiwanensis (strain DSM 17343 / BCRC 17206 / CCUG 44338 / CIP 107171 / LMG 19424 / R1) (Ralstonia taiwanensis (strain LMG 19424)), this protein is Adenine deaminase.